Reading from the N-terminus, the 184-residue chain is Photosystem I assembly protein Ycf4 (184 aa).

2 consecutive transmembrane segments (helical) span residues 21–43 and 58–80; these read NFFWAFILILGALGFLLVGSSSY and VFIPQGIVMCFYGIAGISIGFYL.

Belongs to the Ycf4 family.

Its subcellular location is the plastid. It is found in the chloroplast thylakoid membrane. In terms of biological role, seems to be required for the assembly of the photosystem I complex. The chain is Photosystem I assembly protein Ycf4 from Psilotum nudum (Whisk fern).